Here is a 267-residue protein sequence, read N- to C-terminus: Myb-related protein Hv1 (267 aa).

2 HTH myb-type domains span residues 9–61 (KAHT…INYL) and 62–116 (RPDL…RRKL). 2 consecutive DNA-binding regions (H-T-H motif) follow at residues 37–61 (WRSLPKAAGLLRCGKSCRLRWINYL) and 89–112 (WSLIAGRLPGRTDNEIKNYWNTHI).

Germinating seed and apical meristem of shoot and root.

It is found in the nucleus. Possible transcription activator in response to an external signal. May be involved in the regulation of flavonoid biosynthesis. The sequence is that of Myb-related protein Hv1 (MYB1) from Hordeum vulgare (Barley).